The following is a 561-amino-acid chain: Asparagine synthetase [glutamine-hydrolyzing] (561 aa).

The For GATase activity role is filled by C2. One can recognise a Glutamine amidotransferase type-2 domain in the interval 2–191 (CGIWALFGSD…PGHYEVLDLK (190 aa)). L-glutamine is bound by residues 49 to 53 (RLAVV), 75 to 77 (NGE), and D97. The region spanning 213–536 (HALYDSVEKL…PGRADWLTHY (324 aa)) is the Asparagine synthetase domain. ATP contacts are provided by residues L256, I288, and 363–364 (SG). Position 385 is an N6-acetyllysine (K385). T545 is modified (phosphothreonine). Residue S557 is modified to Phosphoserine.

The catalysed reaction is L-aspartate + L-glutamine + ATP + H2O = L-asparagine + L-glutamate + AMP + diphosphate + H(+). The protein operates within amino-acid biosynthesis; L-asparagine biosynthesis; L-asparagine from L-aspartate (L-Gln route): step 1/1. The chain is Asparagine synthetase [glutamine-hydrolyzing] (ASNS) from Cricetulus griseus (Chinese hamster).